We begin with the raw amino-acid sequence, 196 residues long: Holliday junction branch migration complex subunit RuvA (196 aa).

Positions 1-63 (MYEYFKGIIS…EDAELLYGFA (63 aa)) are domain I. Positions 64–142 (TEEEKQLFLS…AADGLAESKA (79 aa)) are domain II. Residues 143-146 (PVQT) are flexible linker. A domain III region spans residues 147-196 (VDNQELEEAMEAMLALGYKATELKKIKKFFEGTTDTAENYIKSALKMLVK).

Belongs to the RuvA family. As to quaternary structure, homotetramer. Forms an RuvA(8)-RuvB(12)-Holliday junction (HJ) complex. HJ DNA is sandwiched between 2 RuvA tetramers; dsDNA enters through RuvA and exits via RuvB. An RuvB hexamer assembles on each DNA strand where it exits the tetramer. Each RuvB hexamer is contacted by two RuvA subunits (via domain III) on 2 adjacent RuvB subunits; this complex drives branch migration. In the full resolvosome a probable DNA-RuvA(4)-RuvB(12)-RuvC(2) complex forms which resolves the HJ.

It localises to the cytoplasm. Its function is as follows. The RuvA-RuvB-RuvC complex processes Holliday junction (HJ) DNA during genetic recombination and DNA repair, while the RuvA-RuvB complex plays an important role in the rescue of blocked DNA replication forks via replication fork reversal (RFR). RuvA specifically binds to HJ cruciform DNA, conferring on it an open structure. The RuvB hexamer acts as an ATP-dependent pump, pulling dsDNA into and through the RuvAB complex. HJ branch migration allows RuvC to scan DNA until it finds its consensus sequence, where it cleaves and resolves the cruciform DNA. The sequence is that of Holliday junction branch migration complex subunit RuvA from Streptococcus gordonii (strain Challis / ATCC 35105 / BCRC 15272 / CH1 / DL1 / V288).